The following is a 205-amino-acid chain: Translation initiation factor 2 subunit beta (205 aa).

The TRAM domain occupies 145–203 (GIEIGKEYTVTIESTGSAGEGIARYQGYTIYVPKAKKGERVKIIIRKIKRNVAIAELAD).

The protein belongs to the eIF-2-beta/eIF-5 family. In terms of assembly, heterotrimer composed of an alpha, a beta and a gamma chain.

Its function is as follows. eIF-2 functions in the early steps of protein synthesis by forming a ternary complex with GTP and initiator tRNA. This is Translation initiation factor 2 subunit beta from Picrophilus torridus (strain ATCC 700027 / DSM 9790 / JCM 10055 / NBRC 100828 / KAW 2/3).